A 305-amino-acid chain; its full sequence is MVKPEKFIPKAVEKISKEIKDGRAIIALSGGVDSSVCAELAHRAIGGRLQPIYIDTGLMRKGETERIKHIFSHMNLDIVYAKDRFLAALKGITDPEEKRKAIGETFIRVFEEEARKLEADYLIQGTIYPDRIESEGGIKSHHNVGGLPSVMDFKKIVEPIEDLYKDEVREVAWALKLPDEICERMPFPGPGLAVRILGEVTEEKLEVAREANSIVEEELLDRFCPWQTFAAVIGKGTGVKGDIRAYGWIIAVRAVGSRDGMTAEALELPWDVLKKLESRITSEIPKVARVVYDITPKPPATIEFE.

The region spanning 2–184 (VKPEKFIPKA…LKLPDEICER (183 aa)) is the GMPS ATP-PPase domain. 29-35 (SGGVDSS) serves as a coordination point for ATP.

Heterodimer composed of a glutamine amidotransferase subunit (A) and a GMP-binding subunit (B).

It catalyses the reaction XMP + L-glutamine + ATP + H2O = GMP + L-glutamate + AMP + diphosphate + 2 H(+). The protein operates within purine metabolism; GMP biosynthesis; GMP from XMP (L-Gln route): step 1/1. Its function is as follows. Catalyzes the synthesis of GMP from XMP. The sequence is that of GMP synthase [glutamine-hydrolyzing] subunit B from Methanosarcina barkeri (strain Fusaro / DSM 804).